Reading from the N-terminus, the 292-residue chain is Transcription factor HFR1 (292 aa).

Positions 114-153 (KRRIQVLSSDDESEEFTREVPSVTRKGSKRRRRDEKMSNK) are disordered. The segment at 134 to 147 (PSVTRKGSKRRRRD) is basic motif; degenerate. The bHLH domain maps to 134 to 183 (PSVTRKGSKRRRRDEKMSNKMRKLQQLVPNCHKTDKVSVLDKTIEYMKNL). Over residues 139-153 (KGSKRRRRDEKMSNK) the composition is skewed to basic residues. The short motif at 141 to 148 (SKRRRRDE) is the Nuclear localization signal element. The segment at 148–183 (EKMSNKMRKLQQLVPNCHKTDKVSVLDKTIEYMKNL) is helix-loop-helix motif.

As to quaternary structure, binds to FHY1 and FHL. Forms PHYA/FHY1/HFR1 complex. Homodimer and heterodimer with PIF3. Do not interact alone with either phytochrome A (phyA) or B (phyB), but REP1/PIF3 complex binds to phyA and phyB, preferentially to the Pfr forms. Forms non-functional heterodimer with PRE6, causing liberation of PIF4 from the transcriptionally inactive complex HFR1-PIF4. Repressed when bound to PRE1, PRE2 and PRE4. Mainly expressed in fruits and flowers and, to a lower extent, in leaves, stems, seedlings and roots.

It localises to the nucleus. In terms of biological role, atypical bHLH transcription factor that regulates photomorphogenesis through modulation of phytochrome (e.g. PHYA) and cryptochrome signalings. Suppresses the transcriptional regulation activity of PIF4 by forming non-DNA-binding heterodimer. The sequence is that of Transcription factor HFR1 from Arabidopsis thaliana (Mouse-ear cress).